The following is a 452-amino-acid chain: Probable multidrug resistance protein NorM (452 aa).

12 helical membrane passes run 14–34, 56–76, 97–117, 129–149, 164–184, 195–215, 244–264, 284–304, 319–339, 360–380, 392–412, and 417–437; these read LLHILIPIFITQAGLSLITFL, LWTPVYTGLAGILMAVTPIVA, VAALLSIAVLVIGYAAVDLIL, IAKHFLGFLSLGIFPLFVYTV, MMITLSSLPINFVLNYVFIFG, GAGLASALTYWCICIISFFII, IGLPIGFAVFFETSIFAAVTL, ASLLYMLPLSVSMALTIVVGF, LIGIMMAIGFSLFTAACILLF, FLIYALFFQLSDAVAAPIQGA, AAAFVSYWVIGLPVGYMVGTF, and AFGYWIGLIAGLAAGAVGLFF.

It belongs to the multi antimicrobial extrusion (MATE) (TC 2.A.66.1) family.

It is found in the cell membrane. Multidrug efflux pump. This Bacillus subtilis (strain 168) protein is Probable multidrug resistance protein NorM (norM).